The chain runs to 258 residues: Thymidylate synthase (258 aa).

Position 21 (Arg-21) interacts with dUMP. His-51 is a binding site for (6R)-5,10-methylene-5,6,7,8-tetrahydrofolate. Arg-121 to Arg-122 is a binding site for dUMP. The active-site Nucleophile is the Cys-141. Residues Arg-161–Asp-164, Asn-172, and His-202–Tyr-204 contribute to the dUMP site. Asp-164 is a (6R)-5,10-methylene-5,6,7,8-tetrahydrofolate binding site. Ala-257 provides a ligand contact to (6R)-5,10-methylene-5,6,7,8-tetrahydrofolate.

Belongs to the thymidylate synthase family. Bacterial-type ThyA subfamily. Homodimer.

It localises to the cytoplasm. The catalysed reaction is dUMP + (6R)-5,10-methylene-5,6,7,8-tetrahydrofolate = 7,8-dihydrofolate + dTMP. It participates in pyrimidine metabolism; dTTP biosynthesis. Functionally, catalyzes the reductive methylation of 2'-deoxyuridine-5'-monophosphate (dUMP) to 2'-deoxythymidine-5'-monophosphate (dTMP) while utilizing 5,10-methylenetetrahydrofolate (mTHF) as the methyl donor and reductant in the reaction, yielding dihydrofolate (DHF) as a by-product. This enzymatic reaction provides an intracellular de novo source of dTMP, an essential precursor for DNA biosynthesis. The protein is Thymidylate synthase of Dichelobacter nodosus (strain VCS1703A).